The primary structure comprises 185 residues: NOP protein chaperone 1 (185 aa).

Phosphoserine is present on residues S34, S66, and S177. Residues 121–185 (SRSDSKEEDS…DSPASKKKKQ (65 aa)) form a disordered region.

Interacts with NOP58, RUVBL1 and RUVBL2; the interactions are direct and NOPCHAP1 bridges the association of NOP58 with RUVBL1:RUVBL2 even in absence of snoRNAs. The interactions with RUVBL1 and RUVBL2 are disrupted upon ATP binding.

It is found in the nucleus. Functionally, client-loading PAQosome/R2TP complex cofactor that selects NOP58 to promote box C/D small nucleolar ribonucleoprotein (snoRNP) assembly. Acts as a bridge between NOP58 and the R2TP complex via RUVBL1:RUVBL2. The polypeptide is NOP protein chaperone 1 (Mus musculus (Mouse)).